We begin with the raw amino-acid sequence, 523 residues long: Sialate O-acetylesterase (523 aa).

Residues 1–23 (MVAPGLVLGLVLPLILWADRSAG) form the signal peptide. 6 N-linked (GlcNAc...) asparagine glycosylation sites follow: N107, N138, N267, N290, N401, and N422.

The protein localises to the lysosome. It carries out the reaction N-acetyl-9-O-acetylneuraminate + H2O = N-acetylneuraminate + acetate + H(+). The enzyme catalyses an Ac-O-9-sialoglycoconjugate + H2O = a sialoglycoconjugate + acetate + H(+). Its function is as follows. Catalyzes the removal of O-acetyl ester groups from position 9 of the free diacetylated sialate N-acetyl-9-O-acetylneuraminate (Neu5,9Ac2) in the cytosol and of the diacetylated sialate residues of sialylglycoconjugates in the lysosomes. Together with the sialate-O-acetyltransferase they regulate the balance of acetylated sialoglycoconjugates, key players in various processes such as cell-cell interactions, host-pathogen recognition, and tumor antigenicity. The sequence is that of Sialate O-acetylesterase (SIAE) from Pongo abelii (Sumatran orangutan).